The sequence spans 949 residues: MAM domain-containing glycosylphosphatidylinositol anchor protein 2 (949 aa).

The first 25 residues, 1–25, serve as a signal peptide directing secretion; it reads MDLVYGLVWLLTVLLEGISGQGVYA. 2 consecutive Ig-like domains span residues 27–127 and 134–232; these read PTVR…IRVD and PVVT…KMVS. 2 cysteine pairs are disulfide-bonded: C62/C110 and C159/C216. N-linked (GlcNAc...) asparagine glycans are attached at residues N92, N213, and N237. Ig-like domains follow at residues 242–328, 340–436, 442–533, and 540–627; these read PSIK…NIIV, PDPY…VNIS, PNLT…ALVQ, and PAVE…FLVT. 2 cysteine pairs are disulfide-bonded: C264/C310 and C359/C417. N-linked (GlcNAc...) asparagine glycosylation is found at N434, N443, N504, N610, and N703. 2 cysteine pairs are disulfide-bonded: C465–C515 and C561–C611. In terms of domain architecture, Fibronectin type-III spans 638 to 738; that stretch reads DTYNPVWQNR…TIRVIKYTGE (101 aa). The 176-residue stretch at 739 to 914 folds into the MAM domain; sequence FHCGFEDGNI…VSIAEGECAK (176 aa). The GPI-anchor amidated aspartate moiety is linked to residue D924. Residues 925 to 949 constitute a propeptide, removed in mature form; sequence GAVGILVHIWLFPVIILISILSPRR.

In terms of assembly, interacts (through the Ig-like domains) with NLGN2. In terms of tissue distribution, expressed predominantly in neuronal tissue. Expressed in brain.

It is found in the cell membrane. May be involved in cell-cell interactions. The sequence is that of MAM domain-containing glycosylphosphatidylinositol anchor protein 2 (Mdga2) from Rattus norvegicus (Rat).